The chain runs to 1145 residues: Cation channel sperm-associated auxiliary subunit gamma 2 (1145 aa).

Residues 1-38 (MVSRPAMSPVSPVWPRKPNLWAFWVLRLVLLLSLKSWA) form the signal peptide. Topologically, residues 39-1061 (EDALQHCTWL…IHGLPLSSKR (1023 aa)) are extracellular. Intrachain disulfides connect C45–C106 and C160–C166. N103 carries N-linked (GlcNAc...) asparagine glycosylation. N178 carries N-linked (GlcNAc...) asparagine glycosylation. The cysteines at positions 289 and 344 are disulfide-linked. 4 N-linked (GlcNAc...) asparagine glycosylation sites follow: N356, N402, N672, and N743. 6 cysteine pairs are disulfide-bonded: C395/C403, C634/C856, C802/C830, C878/C1042, C905/C914, and C1006/C1012. N-linked (GlcNAc...) asparagine glycosylation is present at N1038. Residues 1062 to 1083 (TSFIVMVSTSFFIALVVFYILF) form a helical membrane-spanning segment. Residues 1084-1145 (CLVWPHIVKA…KEDNVQAKTA (62 aa)) lie on the Cytoplasmic side of the membrane.

Belongs to the CATSPERG family. As to quaternary structure, component of the CatSper complex or CatSpermasome composed of the core pore-forming members CATSPER1, CATSPER2, CATSPER3 and CATSPER4 as well as auxiliary members CATSPERB, CATSPERG2, CATSPERD, CATSPERE, CATSPERZ, C2CD6/CATSPERT, SLCO6C1, TMEM249, TMEM262 and EFCAB9. HSPA1 may be an additional auxiliary complex member. The core complex members CATSPER1, CATSPER2, CATSPER3 and CATSPER4 form a heterotetrameric channel. The auxiliary CATSPERB, CATSPERG2, CATSPERD and CATSPERE subunits form a pavilion-like structure over the pore which stabilizes the complex through interactions with CATSPER4, CATSPER3, CATSPER1 and CATSPER2 respectively. SLCO6C1 interacts with CATSPERE and TMEM262/CATSPERH interacts with CATSPERB, further stabilizing the complex. C2CD6/CATSPERT interacts at least with CATSPERD and is required for targeting the CatSper complex in the flagellar membrane. Testis-specific. Specifically expressed in the principal piece of the sperm tail (at protein level). Expressed in spermatocytes and spermatids within the seminiferous tubule but not in interstitial cells.

The protein localises to the cell projection. It localises to the cilium. It is found in the flagellum membrane. In terms of biological role, auxiliary component of the CatSper complex, a complex involved in sperm cell hyperactivation. Sperm cell hyperactivation is needed for sperm motility which is essential late in the preparation of sperm for fertilization. The polypeptide is Cation channel sperm-associated auxiliary subunit gamma 2 (Mus musculus (Mouse)).